Reading from the N-terminus, the 440-residue chain is Ferreportin (440 aa).

Residues 1–8 lie on the Cytoplasmic side of the membrane; sequence MKVQSLLR. The helical transmembrane segment at 9 to 38 threads the bilayer; it reads IETQLLLGRLLTRSGDQAWDFVVPFALLVI. Asp-24 serves as a coordination point for Ca(2+). Residues 39 to 42 lie on the Extracellular side of the membrane; it reads FPGK. Residues 43–69 form a helical membrane-spanning segment; that stretch reads LQVAAFYYLIVKIGTFLLTPSSGKWID. Residues 70-72 are Cytoplasmic-facing; the sequence is THP. The helical transmembrane segment at 73 to 103 threads the bilayer; the sequence is RIQVVKWGVWLQFFAILAGMVFFGMLDGLVR. Gln-84 provides a ligand contact to Ca(2+). Residues 104 to 109 are Extracellular-facing; it reads AGGRES. A helical transmembrane segment spans residues 110 to 145; it reads WLLSVLFIALALSGVMASLGSQITDISVGNDLAPSL. Residues 146-147 are Cytoplasmic-facing; that stretch reads VA. Residues 148 to 176 traverse the membrane as a helical segment; the sequence is PEKLTHFNSWLRRIDLATEVGAPILAGAL. Residues 177-186 lie on the Extracellular side of the membrane; the sequence is FAFHPEQLPL. A helical transmembrane segment spans residues 187–213; sequence AGLFLIGLWNLVSFVPEYFLLRNVIQR. Positions 196 and 203 each coordinate Ca(2+). At 214–242 the chain is on the cytoplasmic side; the sequence is SGLKIKVLTEAQSWKDTFHINLRGSFSDP. Residues 243 to 271 traverse the membrane as a helical segment; sequence IFWLILSYALLWLSVLSPHGVLLAAYLKD. Topologically, residues 272–276 are extracellular; sequence EMRLP. The chain crosses the membrane as a helical span at residues 277 to 304; it reads ETEIGLFRGLGAVFGLISTVSFPYLVRR. Residues 305 to 306 are Cytoplasmic-facing; that stretch reads LG. Residues 307–329 traverse the membrane as a helical segment; it reads LISSSRWHLGFQGVTLGIAVTAF. Over 330 to 335 the chain is Extracellular; that stretch reads AMGSTA. The helical transmembrane segment at 336 to 365 threads the bilayer; sequence SVYVFLGCILLSRVGLYGFSNGEFELRQRL. The Cytoplasmic portion of the chain corresponds to 366 to 370; the sequence is IPEGR. The chain crosses the membrane as a helical span at residues 371-395; it reads RGELNSLSSLTTTSATLILFSAGSL. The Extracellular portion of the chain corresponds to 396–398; sequence LPQ. A helical membrane pass occupies residues 399-424; it reads TEDFKYLVYVSLAAVLLANVVFIKWS. The Cytoplasmic portion of the chain corresponds to 425 to 440; sequence SRQGVVTSGAAEPVES.

This sequence belongs to the ferroportin (FP) (TC 2.A.100) family. The cofactor is Ca(2+).

The protein localises to the cell membrane. Iron transpoter that exports Fe(2+) from the cell. Also binds to Co(2+) and Ni(2+). May act as a multivalent divalent metal transporter. The transporter is composed of 12 transmembrane (TM) helices organized into N-terminal (TM1-6) and C-terminal (TM7-12) domains. The substrate-binding site is formed at the interface of the two domains and is alternately accessible from either side of the membrane. The transport cycle is viewed as a series of ligand-induced conformational changes that include open outward and open inward states. In Bdellovibrio bacteriovorus (strain ATCC 15356 / DSM 50701 / NCIMB 9529 / HD100), this protein is Ferreportin (slc39).